The following is a 748-amino-acid chain: Holliday junction recognition protein (748 aa).

A phosphoserine mark is found at serine 123, serine 140, serine 185, serine 201, and serine 211. The segment at 191–226 is disordered; that stretch reads PGYCSRISRKSPGDPAKPASSPREWDPLHPSSTDMA. A Glycyl lysine isopeptide (Lys-Gly) (interchain with G-Cter in SUMO2) cross-link involves residue lysine 354. 3 positions are modified to phosphoserine: serine 412, serine 448, and serine 473. Serine 486 is subject to Phosphoserine; by PKB/AKT1. Serine 496 carries the post-translational modification Phosphoserine. A disordered region spans residues 512–574; it reads GRCLPKSDSS…PDKEVPGHGR (63 aa). Positions 524–562 are enriched in polar residues; it reads LPKTNPTHSATRPQQTSDLHVQGNSSGIFRKSVSPSKTL. The segment covering 565-574 has biased composition (basic and acidic residues); the sequence is PDKEVPGHGR. Residues lysine 581 and lysine 586 each participate in a glycyl lysine isopeptide (Lys-Gly) (interchain with G-Cter in SUMO2) cross-link. 2 positions are modified to phosphoserine: serine 595 and serine 642. The segment at 670 to 748 is disordered; sequence RDGTRDHQFP…MLEKLETKSV (79 aa). Residues 688-699 show a composition bias toward polar residues; sequence PQGSGRQGNSLG. The span at 721-748 shows a compositional bias: basic and acidic residues; it reads SEERGENTSYRMEEKSDFMLEKLETKSV.

In terms of assembly, interacts with CENPA (via CATD domain); the interaction is direct and specific for CENPA since it does not interact with H3.1- or H3.3-containing nucleosomes. Heterotrimer composed of HJURP, CENPA and histone H4, where HJURP interacts with the dimer formed by CENPA and histone H4 and prevents tetramerization of CENPA and H4. Identified in a centromere complex containing histones H2A, H2B and H4, and at least CENPA, CENPB, CENPC, CENPT, CENPN, HJURP, SUPT16H, SSRP1 and RSF1. Interacts with 14-3-3 family members in a phosphorylation-dependent manner. Interacts with MSH5 and NBN. In terms of tissue distribution, according to PubMed:17256767, highly expressed in the thymus with lower levels in the placenta, small intestine, liver, skeletal muscle, and colon. According to PubMed:17823411, highly expressed in testis, and at a relatively lower level in thymus and bone marrow. Significantly overexpressed in many lung cancer samples, compared with normal lung.

The protein resides in the nucleus. Its subcellular location is the nucleolus. It localises to the chromosome. The protein localises to the centromere. Functionally, centromeric protein that plays a central role in the incorporation and maintenance of histone H3-like variant CENPA at centromeres. Acts as a specific chaperone for CENPA and is required for the incorporation of newly synthesized CENPA molecules into nucleosomes at replicated centromeres. Prevents CENPA-H4 tetramerization and prevents premature DNA binding by the CENPA-H4 tetramer. Directly binds Holliday junctions. This chain is Holliday junction recognition protein (HJURP), found in Homo sapiens (Human).